The sequence spans 230 residues: Sodium channel modifier 1 (230 aa).

Serine 2 is subject to Phosphoserine. Positions 4–20 (KREGDDWSQLNVLKKRR) match the Bipartite nuclear localization signal motif. A Matrin-type zinc finger spans residues 42-74 (FACAICPHRPVLDTLAMLTAHRAGKKHLSSLQL). Residue lysine 67 forms a Glycyl lysine isopeptide (Lys-Gly) (interchain with G-Cter in SUMO2) linkage. Disordered regions lie at residues 76 to 106 (YGKK…EAPL) and 129 to 191 (RRKY…RALD). Residues 89-100 (PRQHNELRREET) show a composition bias toward basic and acidic residues. The span at 142 to 151 (SRPPLPPPEV) shows a compositional bias: pro residues. The segment covering 167-180 (GSQTKESATVSSPA) has biased composition (polar residues). Phosphoserine occurs at positions 183 and 219. The segment at 188 to 230 (RALDHYLTLRSSGWIPDGRGRWIKDENVEFDSDEEEPPDLPLD) is required for interaction with LUC7L2.

In terms of assembly, component of the minor spliceosome. Within this complex, interacts with RNF113A, as well as with SF3B1/SF3b155, SF3B2/SF3b145, SF3B3/SF3b130 and CDC5L. May interact with LUC7L2 and SNRNP70.

It localises to the nucleus. Its subcellular location is the nucleoplasm. It is found in the nucleus speckle. In terms of biological role, as a component of the minor spliceosome, involved in the splicing of U12-type introns in pre-mRNAs. Plays a role in the regulation of primary cilia length and Hedgehog signaling. The chain is Sodium channel modifier 1 (SCNM1) from Bos taurus (Bovine).